The primary structure comprises 331 residues: 6-phosphogluconolactonase (331 aa).

This sequence belongs to the cycloisomerase 2 family.

The catalysed reaction is 6-phospho-D-glucono-1,5-lactone + H2O = 6-phospho-D-gluconate + H(+). It participates in carbohydrate degradation; pentose phosphate pathway; D-ribulose 5-phosphate from D-glucose 6-phosphate (oxidative stage): step 2/3. Its function is as follows. Catalyzes the hydrolysis of 6-phosphogluconolactone to 6-phosphogluconate. In Klebsiella pneumoniae (strain 342), this protein is 6-phosphogluconolactonase.